Here is a 318-residue protein sequence, read N- to C-terminus: Methionyl-tRNA formyltransferase (318 aa).

115-118 provides a ligand contact to (6S)-5,6,7,8-tetrahydrofolate; that stretch reads SLLP.

The protein belongs to the Fmt family.

The enzyme catalyses L-methionyl-tRNA(fMet) + (6R)-10-formyltetrahydrofolate = N-formyl-L-methionyl-tRNA(fMet) + (6S)-5,6,7,8-tetrahydrofolate + H(+). Attaches a formyl group to the free amino group of methionyl-tRNA(fMet). The formyl group appears to play a dual role in the initiator identity of N-formylmethionyl-tRNA by promoting its recognition by IF2 and preventing the misappropriation of this tRNA by the elongation apparatus. The polypeptide is Methionyl-tRNA formyltransferase (Deinococcus radiodurans (strain ATCC 13939 / DSM 20539 / JCM 16871 / CCUG 27074 / LMG 4051 / NBRC 15346 / NCIMB 9279 / VKM B-1422 / R1)).